We begin with the raw amino-acid sequence, 470 residues long: Argininosuccinate lyase (470 aa).

The protein belongs to the lyase 1 family. Argininosuccinate lyase subfamily.

It localises to the cytoplasm. The enzyme catalyses 2-(N(omega)-L-arginino)succinate = fumarate + L-arginine. It functions in the pathway amino-acid biosynthesis; L-arginine biosynthesis; L-arginine from L-ornithine and carbamoyl phosphate: step 3/3. The chain is Argininosuccinate lyase from Mycolicibacterium gilvum (strain PYR-GCK) (Mycobacterium gilvum (strain PYR-GCK)).